A 375-amino-acid polypeptide reads, in one-letter code: Alcohol dehydrogenase 1 (375 aa).

N-acetylalanine is present on A1. The Zn(2+) site is built by C46, H68, C98, C101, C104, C112, and C175. Residues 200–205 (GLGGVG), D224, K229, 293–295 (VGV), and R370 each bind NAD(+).

This sequence belongs to the zinc-containing alcohol dehydrogenase family. Class-I subfamily. In terms of assembly, homodimer. Requires Zn(2+) as cofactor.

The protein resides in the cytoplasm. It catalyses the reaction a primary alcohol + NAD(+) = an aldehyde + NADH + H(+). The catalysed reaction is a secondary alcohol + NAD(+) = a ketone + NADH + H(+). The protein is Alcohol dehydrogenase 1 of Columba livia (Rock dove).